Consider the following 953-residue polypeptide: Ubiquitin carboxyl-terminal hydrolase CYLD (953 aa).

Positions 106–590 (CEERFSLFKN…FEIMIGKKKG (485 aa)) are interaction with TRIP. 2 consecutive CAP-Gly domains span residues 153-198 (LAER…VFVA) and 253-286 (DVLP…VQLC). Disordered regions lie at residues 313 to 349 (PPKL…RNRS) and 384 to 410 (SLTE…LSSE). Residues 337–346 (TGSTSDPGTR) are compositionally biased toward polar residues. Phosphoserine occurs at positions 384, 415, and 419. The interaction with TRAF2 stretch occupies residues 391-466 (DFGHASPPLQ…LAVSSGNSHG (76 aa)). Residues 467–681 (LEVGSLAEVK…FTSEEKDPEE (215 aa)) are interaction with IKBKG/NEMO. In terms of domain architecture, CAP-Gly 3 spans 489–532 (GQPPGLNEVLAGLELEDECAGCTDGTFRGTRYFTCALKKALFVK). A USP domain is found at 589–947 (KGIQGHYNSC…DAYMCMYQSP (359 aa)). The active-site Nucleophile is Cys598. Positions 778–830 (LEDTPRQCRICGGLAMYECRECYDDPDISAGKIKQFCKTCNAQVHLHPKRLNH) are B-box. Positions 785, 788, 796, 799, 814, 817, 822, and 830 each coordinate Zn(2+). His868 serves as the catalytic Proton acceptor.

It belongs to the peptidase C19 family. In terms of assembly, interacts (via CAP-Gly domain) with IKBKG/NEMO (via proline-rich C-terminal region). Interacts with TRAF2 and TRIP. Interacts with PLK1, DVL1, DVL3, MAVS, TBK1, IKKE and RIGI. Interacts (via CAP-Gly domain) with microtubules. Interacts with HDAC6 and BCL3. Interacts with MAP3K7. Identified in a complex with TRAF6 and SQSTM1. Interacts with OPTN and SQSTM1. Interacts with CEP350. Interacts with RNF31; the interaction is indirect and is mediated via SPATA2. Interacts with SPATA2 (via the PUB domain); the interaction is direct and recruits CYLD to the LUBAC complex, thereby regulating TNF-alpha-induced necroptosis. Phosphorylated on several serine residues by IKKA and/or IKKB in response to immune stimuli. Phosphorylation requires IKBKG. Phosphorylation abolishes TRAF2 deubiquitination, interferes with the activation of Jun kinases, and strongly reduces CD40-dependent gene activation by NF-kappa-B. Post-translationally, ubiquitinated. Polyubiquitinated in hepatocytes treated with palmitic acid. Ubiquitination is mediated by E3 ligase TRIM47 and leads to proteasomal degradation.

The protein resides in the cytoplasm. Its subcellular location is the perinuclear region. It localises to the cytoskeleton. It is found in the cell membrane. The protein localises to the microtubule organizing center. The protein resides in the centrosome. Its subcellular location is the spindle. It localises to the cilium basal body. It carries out the reaction Thiol-dependent hydrolysis of ester, thioester, amide, peptide and isopeptide bonds formed by the C-terminal Gly of ubiquitin (a 76-residue protein attached to proteins as an intracellular targeting signal).. Its function is as follows. Deubiquitinase that specifically cleaves 'Lys-63'- and linear 'Met-1'-linked polyubiquitin chains and is involved in NF-kappa-B activation and TNF-alpha-induced necroptosis. Negatively regulates NF-kappa-B activation by deubiquitinating upstream signaling factors. Contributes to the regulation of cell survival, proliferation and differentiation via its effects on NF-kappa-B activation. Negative regulator of Wnt signaling. Inhibits HDAC6 and thereby promotes acetylation of alpha-tubulin and stabilization of microtubules. Plays a role in the regulation of microtubule dynamics, and thereby contributes to the regulation of cell proliferation, cell polarization, cell migration, and angiogenesis. Required for normal cell cycle progress and normal cytokinesis. Inhibits nuclear translocation of NF-kappa-B. Plays a role in the regulation of inflammation and the innate immune response, via its effects on NF-kappa-B activation. Dispensable for the maturation of intrathymic natural killer cells, but required for the continued survival of immature natural killer cells. Negatively regulates TNFRSF11A signaling and osteoclastogenesis. Involved in the regulation of ciliogenesis, allowing ciliary basal bodies to migrate and dock to the plasma membrane; this process does not depend on NF-kappa-B activation. Ability to remove linear ('Met-1'-linked) polyubiquitin chains regulates innate immunity and TNF-alpha-induced necroptosis: recruited to the LUBAC complex via interaction with SPATA2 and restricts linear polyubiquitin formation on target proteins. Regulates innate immunity by restricting linear polyubiquitin formation on RIPK2 in response to NOD2 stimulation. Involved in TNF-alpha-induced necroptosis by removing linear ('Met-1'-linked) polyubiquitin chains from RIPK1, thereby regulating the kinase activity of RIPK1. Negatively regulates intestinal inflammation by removing 'Lys-63' linked polyubiquitin chain of NLRP6, thereby reducing the interaction between NLRP6 and PYCARD/ASC and formation of the NLRP6 inflammasome. Does not catalyze deubiquitination of heterotypic 'Lys-63'-/'Lys-48'-linked branched ubiquitin chains. Removes 'Lys-63' linked polyubiquitin chain of MAP3K7, which inhibits phosphorylation and blocks downstream activation of the JNK-p38 kinase cascades. Also removes 'Lys-63'-linked polyubiquitin chains of MAP3K1 and MA3P3K3, which inhibit their interaction with MAP2K1 and MAP2K2. This chain is Ubiquitin carboxyl-terminal hydrolase CYLD (CYLD), found in Bos taurus (Bovine).